The following is a 619-amino-acid chain: Cationic amino acid transporter 3 (619 aa).

At 1–36 (MLWQALRRFGQKLVRRRLLELGMGETRLARCLSTLD) the chain is on the cytoplasmic side. Residues 37 to 57 (LVALGVGSTLGAGVYVLAGEV) form a helical membrane-spanning segment. Residues 58–61 (AKEK) lie on the Extracellular side of the membrane. Residues 62-82 (AGPSIVICFLVAALSSVLAGL) form a helical membrane-spanning segment. Residues 83–107 (CYAEFGARVPGSGSAYLYSYVTVGE) lie on the Cytoplasmic side of the membrane. A helical membrane pass occupies residues 108-128 (LWAFTTGWNLILSYVIGTASV). At 129-162 (ARAWSSAFDNLIGNHISQTLKGTILLNMPHVLAE) the chain is on the extracellular side. The helical transmembrane segment at 163–183 (YPDFFALALVLLLTGLLVLGA) threads the bilayer. Over 184-191 (NESGLVTK) the chain is Cytoplasmic. Residues 192–212 (VFTGMNLLVLGFVIISGFIKG) traverse the membrane as a helical segment. Residues 213–244 (ELRNWKLTKEDYCLTMSESNGTCSLDSMGSGG) lie on the Extracellular side of the membrane. The N-linked (GlcNAc...) asparagine glycan is linked to Asn232. The chain crosses the membrane as a helical span at residues 245 to 265 (FMPFGLEGILRGAATCFYAFV). At 266 to 285 (GFDCIATTGEEAQNPQRSIP) the chain is on the cytoplasmic side. The helical transmembrane segment at 286 to 306 (MGIVISLSICFLAYFGVSSAL) threads the bilayer. Residues 307–335 (TLMMPYYKLQPESPLPEAFTYVGWEPARY) lie on the Extracellular side of the membrane. The helical transmembrane segment at 336-356 (LVAIGSLCALSTSLLGSMFPM) threads the bilayer. Over 357–382 (PRVIYAMAEDGLLFRVLARVHNGTHT) the chain is Cytoplasmic. The helical transmembrane segment at 383–403 (PIVATVVSGVIAAFMAFLFEL) threads the bilayer. Topologically, residues 404 to 406 (TDL) are extracellular. A helical membrane pass occupies residues 407–427 (VDLMSIGTLLAYSLVSICVLI). Topologically, residues 428-475 (LRYQPDQEMKNGEEEVELQEERTLEAEKLTVQALFCQVDSIPTLLSGR) are cytoplasmic. Residues 476 to 496 (IVYVCSSLLAVLLTVLCLVLT) traverse the membrane as a helical segment. The Extracellular segment spans residues 497–507 (WWTTPLHSGDP). A helical transmembrane segment spans residues 508–528 (VWVTVVVLILGLILGISGVIW). The Cytoplasmic portion of the chain corresponds to 529–540 (RQPQNRTPLHFK). Residues 541-561 (VPVVPLLPLVSIFVNVYLMMQ) traverse the membrane as a helical segment. Topologically, residues 562–569 (MTADTWAR) are extracellular. A helical membrane pass occupies residues 570 to 590 (FGVWMLIGFAIYFGYGIQHSV). Topologically, residues 591 to 619 (EEVKNHQTLPKTRPQTIDLDLTTSCVHSI) are cytoplasmic. A Phosphothreonine modification is found at Thr606. A Phosphoserine modification is found at Ser618.

Belongs to the amino acid-polyamine-organocation (APC) superfamily. Cationic amino acid transporter (CAT) (TC 2.A.3.3) family. Post-translationally, N-glycosylated. As to expression, highly expressed in brain.

Its subcellular location is the cell membrane. The catalysed reaction is L-arginine(in) = L-arginine(out). It carries out the reaction L-lysine(in) = L-lysine(out). The enzyme catalyses L-ornithine(in) = L-ornithine(out). With respect to regulation, inhibited by high potassium ions-induced membrane depolarization. Uniporter that mediates the uptake of cationic L-amino acids such as L-arginine, L-lysine and L-ornithine. The transport is sodium ions- and pH-independent, moderately trans-stimulated and is mediated by passive diffusion. The polypeptide is Cationic amino acid transporter 3 (Rattus norvegicus (Rat)).